The sequence spans 384 residues: Lipid-A-disaccharide synthase (384 aa).

Belongs to the LpxB family.

It carries out the reaction a lipid X + a UDP-2-N,3-O-bis[(3R)-3-hydroxyacyl]-alpha-D-glucosamine = a lipid A disaccharide + UDP + H(+). It participates in bacterial outer membrane biogenesis; LPS lipid A biosynthesis. Condensation of UDP-2,3-diacylglucosamine and 2,3-diacylglucosamine-1-phosphate to form lipid A disaccharide, a precursor of lipid A, a phosphorylated glycolipid that anchors the lipopolysaccharide to the outer membrane of the cell. This is Lipid-A-disaccharide synthase from Geobacter sulfurreducens (strain ATCC 51573 / DSM 12127 / PCA).